The primary structure comprises 1167 residues: mRNA 3'-end-processing protein rna-14 (1167 aa).

The interval M1–P245 is disordered. 2 stretches are compositionally biased toward acidic residues: residues E16–G26 and N70–D79. Residues T102 to A111 show a composition bias toward low complexity. The segment covering D124–E137 has biased composition (acidic residues). Composition is skewed to low complexity over residues P138 to P150 and G159 to A191. The span at T192–G218 shows a compositional bias: polar residues. The span at A219 to P245 shows a compositional bias: low complexity. HAT repeat units lie at residues N277 to S309, N311 to R342, Q352 to F387, Q401 to G434, T471 to S504, and L518 to D550. Positions Q882 to D893 are enriched in polar residues. 2 disordered regions span residues Q882–G980 and A1075–Y1167. Low complexity predominate over residues S908 to A922. A compositionally biased stretch (basic and acidic residues) spans R924–F946. Gly residues predominate over residues G969 to A979. The segment covering S1079 to P1090 has biased composition (low complexity). A compositionally biased stretch (pro residues) spans E1121–A1134. Residues Q1135–Q1151 are compositionally biased toward low complexity.

The protein localises to the nucleus. It localises to the cytoplasm. Functionally, component of the cleavage factor IA (CFIA) complex, which is involved in the endonucleolytic cleavage during polyadenylation-dependent pre-mRNA 3'-end formation. The sequence is that of mRNA 3'-end-processing protein rna-14 (rna-14) from Neurospora crassa (strain ATCC 24698 / 74-OR23-1A / CBS 708.71 / DSM 1257 / FGSC 987).